Consider the following 247-residue polypeptide: uncharacterized protein (247 aa).

Belongs to the AIM2 family.

It localises to the cytoplasm. Its subcellular location is the nucleus. This is an uncharacterized protein from Schizosaccharomyces pombe (strain 972 / ATCC 24843) (Fission yeast).